The sequence spans 494 residues: ATP synthase subunit beta, plastid (494 aa).

169 to 176 (GGAGVGKT) contacts ATP.

This sequence belongs to the ATPase alpha/beta chains family. In terms of assembly, F-type ATPases have 2 components, CF(1) - the catalytic core - and CF(0) - the membrane proton channel. CF(1) has five subunits: alpha(3), beta(3), gamma(1), delta(1), epsilon(1). CF(0) has four main subunits: a(1), b(1), b'(1) and c(9-12).

The protein localises to the plastid membrane. It carries out the reaction ATP + H2O + 4 H(+)(in) = ADP + phosphate + 5 H(+)(out). Produces ATP from ADP in the presence of a proton gradient across the membrane. The catalytic sites are hosted primarily by the beta subunits. The sequence is that of ATP synthase subunit beta, plastid (atpB) from Cuscuta sandwichiana (Kauna'oa).